The chain runs to 341 residues: Methionine import ATP-binding protein MetN 3 (341 aa).

Residues 2–241 enclose the ABC transporter domain; that stretch reads ILLENVKKIY…PQQDITKRFV (240 aa). 38 to 45 is an ATP binding site; sequence GYSGAGKS.

It belongs to the ABC transporter superfamily. Methionine importer (TC 3.A.1.24) family. In terms of assembly, the complex is composed of two ATP-binding proteins (MetN), two transmembrane proteins (MetI) and a solute-binding protein (MetQ).

Its subcellular location is the cell membrane. The enzyme catalyses L-methionine(out) + ATP + H2O = L-methionine(in) + ADP + phosphate + H(+). It carries out the reaction D-methionine(out) + ATP + H2O = D-methionine(in) + ADP + phosphate + H(+). In terms of biological role, part of the ABC transporter complex MetNIQ involved in methionine import. Responsible for energy coupling to the transport system. This is Methionine import ATP-binding protein MetN 3 from Bacillus anthracis.